We begin with the raw amino-acid sequence, 128 residues long: MTRIKRGYIARRRRTKMRLFASSFRGAHSRLTRTITQQKIRALFSAHRDRDKQKINFRRLWIARINAVIRKRGVSYSYSKLIHDLYKRQLLLNRKILAQIAISNRNCLYMISNEIIKETERKEYTGII.

It belongs to the bacterial ribosomal protein bL20 family.

The protein resides in the plastid. Binds directly to 23S ribosomal RNA and is necessary for the in vitro assembly process of the 50S ribosomal subunit. It is not involved in the protein synthesizing functions of that subunit. The protein is Large ribosomal subunit protein bL20c (rpl20) of Lathraea clandestina (Purple toothwort).